A 103-amino-acid polypeptide reads, in one-letter code: Urease subunit gamma (103 aa).

This sequence belongs to the urease gamma subunit family. Heterotrimer of UreA (gamma), UreB (beta) and UreC (alpha) subunits. Three heterotrimers associate to form the active enzyme.

It localises to the cytoplasm. The catalysed reaction is urea + 2 H2O + H(+) = hydrogencarbonate + 2 NH4(+). It functions in the pathway nitrogen metabolism; urea degradation; CO(2) and NH(3) from urea (urease route): step 1/1. This is Urease subunit gamma from Paracoccus denitrificans (strain Pd 1222).